We begin with the raw amino-acid sequence, 700 residues long: Elongation factor G (700 aa).

In terms of domain architecture, tr-type G spans 10 to 285; that stretch reads DRTRNIGIMA…AVIDYLPSPL (276 aa). GTP contacts are provided by residues 19–26, 83–87, and 137–140; these read AHIDAGKT, DTPGH, and NKMD.

Belongs to the TRAFAC class translation factor GTPase superfamily. Classic translation factor GTPase family. EF-G/EF-2 subfamily.

It localises to the cytoplasm. In terms of biological role, catalyzes the GTP-dependent ribosomal translocation step during translation elongation. During this step, the ribosome changes from the pre-translocational (PRE) to the post-translocational (POST) state as the newly formed A-site-bound peptidyl-tRNA and P-site-bound deacylated tRNA move to the P and E sites, respectively. Catalyzes the coordinated movement of the two tRNA molecules, the mRNA and conformational changes in the ribosome. This is Elongation factor G from Lacticaseibacillus casei (strain BL23) (Lactobacillus casei).